The sequence spans 144 residues: MVAFTEKQDALVSSSFEAFKANIPQYSVVFYTSILEKAPAAKDLFSFLANGVDPTNPKLTGHAEKLFALVRDSAGQLKASGTVVADAALGSVHAQKAVTDPQFVVVKEALLKTIKAAVGDKWSDELSRAWEVAYDELAAAIKKA.

Valine 2 bears the N-acetylvaline mark. The Globin domain occupies 3-144 (AFTEKQDALV…DELAAAIKKA (142 aa)). Tyrosine 26 and tyrosine 31 each carry nitrated tyrosine. Heme b is bound at residue serine 46. At serine 46 the chain carries Phosphoserine. Histidine 62 provides a ligand contact to O2. The heme b site is built by lysine 65, histidine 93, and lysine 96. Tyrosine 134 is subject to Nitrated tyrosine.

This sequence belongs to the plant globin family. As to quaternary structure, monomer. Post-translationally, nitrated mainly at Tyr-31 and, to a lower extent, at Tyr-26 and Tyr-134, in effective nodules and particularly in hypoxic conditions; this mechanism may play a protective role in the symbiosis by buffering toxic peroxynitrite NO(2)(-). Nitration level decrease during nodule senescence. Phosphorylation at Ser-46 disrupts the molecular environment of its porphyrin ring oxygen binding pocket, thus leading to a reduced oxygen consumption and to the delivery of oxygen O(2) to symbiosomes. Specifically expressed in root nodules.

It is found in the cytoplasm. The protein resides in the cytosol. Its subcellular location is the nucleus. Functionally, leghemoglobin that reversibly binds oxygen O(2) through a pentacoordinated heme iron. In root nodules, facilitates the diffusion of oxygen to the bacteroids while preventing the bacterial nitrogenase from being inactivated by buffering dioxygen, nitric oxide and carbon monoxide, and promoting the formation of reactive oxygen species (ROS, e.g. H(2)O(2)). This role is essential for symbiotic nitrogen fixation (SNF). The protein is Leghemoglobin 3 of Glycine max (Soybean).